Here is a 358-residue protein sequence, read N- to C-terminus: Alanine racemase, biosynthetic (358 aa).

Lys34 (proton acceptor; specific for D-alanine) is an active-site residue. Position 34 is an N6-(pyridoxal phosphate)lysine (Lys34). Arg130 provides a ligand contact to substrate. Catalysis depends on Tyr254, which acts as the Proton acceptor; specific for L-alanine. Position 302 (Met302) interacts with substrate.

It belongs to the alanine racemase family. Requires pyridoxal 5'-phosphate as cofactor.

It catalyses the reaction L-alanine = D-alanine. It participates in amino-acid biosynthesis; D-alanine biosynthesis; D-alanine from L-alanine: step 1/1. Its pathway is cell wall biogenesis; peptidoglycan biosynthesis. Functionally, catalyzes the interconversion of L-alanine and D-alanine. Provides the D-alanine required for cell wall biosynthesis. In Pseudomonas aeruginosa (strain ATCC 15692 / DSM 22644 / CIP 104116 / JCM 14847 / LMG 12228 / 1C / PRS 101 / PAO1), this protein is Alanine racemase, biosynthetic (alr).